The sequence spans 408 residues: Peptidase T (408 aa).

Histidine 78 lines the Zn(2+) pocket. Aspartate 80 is a catalytic residue. Aspartate 140 serves as a coordination point for Zn(2+). Catalysis depends on glutamate 173, which acts as the Proton acceptor. Zn(2+) contacts are provided by glutamate 174, aspartate 196, and histidine 379.

The protein belongs to the peptidase M20B family. Zn(2+) is required as a cofactor.

Its subcellular location is the cytoplasm. It catalyses the reaction Release of the N-terminal residue from a tripeptide.. In terms of biological role, cleaves the N-terminal amino acid of tripeptides. The polypeptide is Peptidase T (Escherichia fergusonii (strain ATCC 35469 / DSM 13698 / CCUG 18766 / IAM 14443 / JCM 21226 / LMG 7866 / NBRC 102419 / NCTC 12128 / CDC 0568-73)).